Reading from the N-terminus, the 309-residue chain is Acetylglutamate kinase (309 aa).

Residues 82–83 (GG), Arg104, and Asn206 each bind substrate.

This sequence belongs to the acetylglutamate kinase family. ArgB subfamily.

The protein localises to the cytoplasm. It carries out the reaction N-acetyl-L-glutamate + ATP = N-acetyl-L-glutamyl 5-phosphate + ADP. It functions in the pathway amino-acid biosynthesis; L-arginine biosynthesis; N(2)-acetyl-L-ornithine from L-glutamate: step 2/4. In terms of biological role, catalyzes the ATP-dependent phosphorylation of N-acetyl-L-glutamate. The polypeptide is Acetylglutamate kinase (Cupriavidus metallidurans (strain ATCC 43123 / DSM 2839 / NBRC 102507 / CH34) (Ralstonia metallidurans)).